Consider the following 318-residue polypeptide: 4-diphosphocytidyl-2-C-methyl-D-erythritol kinase (318 aa).

The active site involves lysine 25. 110-120 (PVAGGMAGGSA) is an ATP binding site. Aspartate 152 is a catalytic residue.

This sequence belongs to the GHMP kinase family. IspE subfamily.

The enzyme catalyses 4-CDP-2-C-methyl-D-erythritol + ATP = 4-CDP-2-C-methyl-D-erythritol 2-phosphate + ADP + H(+). It participates in isoprenoid biosynthesis; isopentenyl diphosphate biosynthesis via DXP pathway; isopentenyl diphosphate from 1-deoxy-D-xylulose 5-phosphate: step 3/6. Functionally, catalyzes the phosphorylation of the position 2 hydroxy group of 4-diphosphocytidyl-2C-methyl-D-erythritol. In Mycobacterium tuberculosis (strain ATCC 25177 / H37Ra), this protein is 4-diphosphocytidyl-2-C-methyl-D-erythritol kinase.